Reading from the N-terminus, the 177-residue chain is ATP-dependent protease subunit HslV (177 aa).

Residue Thr5 is part of the active site. Residues Gly161, Cys164, and Thr167 each contribute to the Na(+) site.

Belongs to the peptidase T1B family. HslV subfamily. A double ring-shaped homohexamer of HslV is capped on each side by a ring-shaped HslU homohexamer. The assembly of the HslU/HslV complex is dependent on binding of ATP.

The protein resides in the cytoplasm. The catalysed reaction is ATP-dependent cleavage of peptide bonds with broad specificity.. Its activity is regulated as follows. Allosterically activated by HslU binding. Protease subunit of a proteasome-like degradation complex believed to be a general protein degrading machinery. The sequence is that of ATP-dependent protease subunit HslV from Campylobacter concisus (strain 13826).